Reading from the N-terminus, the 149-residue chain is Transcription antitermination protein NusB (149 aa).

The protein belongs to the NusB family.

Its function is as follows. Involved in transcription antitermination. Required for transcription of ribosomal RNA (rRNA) genes. Binds specifically to the boxA antiterminator sequence of the ribosomal RNA (rrn) operons. This Acinetobacter baumannii (strain AB307-0294) protein is Transcription antitermination protein NusB.